A 479-amino-acid polypeptide reads, in one-letter code: Putative L-cysteine desulfhydrase 2 (479 aa).

Positions Met-1–Gly-36 are disordered. Over residues Gly-7–Gly-36 the composition is skewed to low complexity. The residue at position 270 (Lys-270) is an N6-(pyridoxal phosphate)lysine.

It belongs to the class-V pyridoxal-phosphate-dependent aminotransferase family. Pyridoxal 5'-phosphate is required as a cofactor.

It catalyses the reaction L-cysteine + H2O = hydrogen sulfide + pyruvate + NH4(+) + H(+). Its function is as follows. Catalyzes the production of hydrogen sulfide (H2S) from cysteine. This Oryza sativa subsp. japonica (Rice) protein is Putative L-cysteine desulfhydrase 2.